The following is a 134-amino-acid chain: Phosphoribosyl-AMP cyclohydrolase (134 aa).

A Mg(2+)-binding site is contributed by Asp-77. Cys-78 contributes to the Zn(2+) binding site. Positions 79 and 81 each coordinate Mg(2+). The Zn(2+) site is built by Cys-95 and Cys-102.

Belongs to the PRA-CH family. As to quaternary structure, homodimer. It depends on Mg(2+) as a cofactor. Zn(2+) is required as a cofactor.

It is found in the cytoplasm. It carries out the reaction 1-(5-phospho-beta-D-ribosyl)-5'-AMP + H2O = 1-(5-phospho-beta-D-ribosyl)-5-[(5-phospho-beta-D-ribosylamino)methylideneamino]imidazole-4-carboxamide. It participates in amino-acid biosynthesis; L-histidine biosynthesis; L-histidine from 5-phospho-alpha-D-ribose 1-diphosphate: step 3/9. Catalyzes the hydrolysis of the adenine ring of phosphoribosyl-AMP. This Pseudomonas aeruginosa (strain UCBPP-PA14) protein is Phosphoribosyl-AMP cyclohydrolase.